Reading from the N-terminus, the 98-residue chain is MRPGRPLAGFYATLRRSFRRMSKRSKNKAKKERVPVEDRPPTPMPTSQRLIRRNALGGGVRPDAEDCIQRCHPLEPALGVSTKNFDLLSLRCELGWCG.

Over residues 19 to 31 (RRMSKRSKNKAKK) the composition is skewed to basic residues. The tract at residues 19–47 (RRMSKRSKNKAKKERVPVEDRPPTPMPTS) is disordered.

The protein belongs to the lymphocryptovirus BNLF2B family.

This is an uncharacterized protein from Epstein-Barr virus (strain AG876) (HHV-4).